The following is a 481-amino-acid chain: Glutamyl-tRNA(Gln) amidotransferase subunit A (481 aa).

Residues Lys-78 and Ser-153 each act as charge relay system in the active site. Ser-177 functions as the Acyl-ester intermediate in the catalytic mechanism.

This sequence belongs to the amidase family. GatA subfamily. As to quaternary structure, heterotrimer of A, B and C subunits.

It catalyses the reaction L-glutamyl-tRNA(Gln) + L-glutamine + ATP + H2O = L-glutaminyl-tRNA(Gln) + L-glutamate + ADP + phosphate + H(+). Allows the formation of correctly charged Gln-tRNA(Gln) through the transamidation of misacylated Glu-tRNA(Gln) in organisms which lack glutaminyl-tRNA synthetase. The reaction takes place in the presence of glutamine and ATP through an activated gamma-phospho-Glu-tRNA(Gln). The chain is Glutamyl-tRNA(Gln) amidotransferase subunit A from Borreliella afzelii (strain PKo) (Borrelia afzelii).